An 844-amino-acid polypeptide reads, in one-letter code: Saxiphilin (844 aa).

The signal sequence occupies residues 1-19; sequence MAPTFQTALFFTIISLSFA. The region spanning 26-106 is the Transferrin-like 1; first part domain; it reads VRWCAISDLE…IAEPYSSNRD (81 aa). 19 cysteine pairs are disulfide-bonded: C29–C64, C39–C55, C110–C130, C141–C148, C150–C172, C180–C202, C222–C244, C277–C360, C322–C335, C332–C343, C388–C402, C495–C527, C505–C518, C552–C839, C570–C799, C607–C685, C641–C655, C652–C668, and C725–C739. Thyroglobulin type-1 domains follow at residues 107–172 and 177–244; these read LQKC…RATC and LPKC…PATC. Residues 109–249 are absent in transferrins; that stretch reads KCLKERQQAL…IPATCQKHDL (141 aa). Residues 245–482 form the Transferrin-like 1; second part domain; it reads QKHDLVTTCH…LFHAMKALTG (238 aa). In terms of domain architecture, Transferrin-like 2 spans 492-828; that stretch reads VRWCTINKLE…YYTTVYGASR (337 aa).

Belongs to the transferrin family. Monomer. Plasma. Highest levels of transcripts found in the liver, the lung, the pancreas and the brain.

Its subcellular location is the secreted. Binds specifically to the neurotoxin saxitoxin. Its physiological role may be to transport or sequester an endogenous organic molecule other than Fe(3+). It may participate in a detoxification mechanism for neutralizing a microbial toxin. This is Saxiphilin from Aquarana catesbeiana (American bullfrog).